The chain runs to 413 residues: Tryptophan synthase beta chain 2 (413 aa).

At Lys107 the chain carries N6-(pyridoxal phosphate)lysine.

It belongs to the TrpB family. Tetramer of two alpha and two beta chains. It depends on pyridoxal 5'-phosphate as a cofactor.

It catalyses the reaction (1S,2R)-1-C-(indol-3-yl)glycerol 3-phosphate + L-serine = D-glyceraldehyde 3-phosphate + L-tryptophan + H2O. The protein operates within amino-acid biosynthesis; L-tryptophan biosynthesis; L-tryptophan from chorismate: step 5/5. Functionally, the beta subunit is responsible for the synthesis of L-tryptophan from indole and L-serine. This Nostoc sp. (strain PCC 7120 / SAG 25.82 / UTEX 2576) protein is Tryptophan synthase beta chain 2 (trpB2).